We begin with the raw amino-acid sequence, 442 residues long: ATP-dependent protease ATPase subunit HslU (442 aa).

ATP-binding positions include Ile18, Gly60–Glu65, Asp255, Glu320, and Arg392.

This sequence belongs to the ClpX chaperone family. HslU subfamily. In terms of assembly, a double ring-shaped homohexamer of HslV is capped on each side by a ring-shaped HslU homohexamer. The assembly of the HslU/HslV complex is dependent on binding of ATP.

The protein localises to the cytoplasm. Its function is as follows. ATPase subunit of a proteasome-like degradation complex; this subunit has chaperone activity. The binding of ATP and its subsequent hydrolysis by HslU are essential for unfolding of protein substrates subsequently hydrolyzed by HslV. HslU recognizes the N-terminal part of its protein substrates and unfolds these before they are guided to HslV for hydrolysis. The sequence is that of ATP-dependent protease ATPase subunit HslU from Aeromonas hydrophila subsp. hydrophila (strain ATCC 7966 / DSM 30187 / BCRC 13018 / CCUG 14551 / JCM 1027 / KCTC 2358 / NCIMB 9240 / NCTC 8049).